The chain runs to 467 residues: Rhamnulokinase (467 aa).

An ATP-binding site is contributed by 11 to 15 (ASSGR). Substrate-binding positions include A78 and 235-237 (HDT). The Proton acceptor role is filled by D236. T257 contributes to the ATP binding site. N294 provides a ligand contact to substrate. Q302 is an ATP binding site. C351 and C368 are oxidised to a cystine. Residue G400 coordinates ATP.

Belongs to the rhamnulokinase family. The cofactor is Mg(2+).

It catalyses the reaction L-rhamnulose + ATP = L-rhamnulose 1-phosphate + ADP + H(+). Its pathway is carbohydrate degradation; L-rhamnose degradation; glycerone phosphate from L-rhamnose: step 2/3. In terms of biological role, involved in the catabolism of L-rhamnose (6-deoxy-L-mannose). Catalyzes the transfer of the gamma-phosphate group from ATP to the 1-hydroxyl group of L-rhamnulose to yield L-rhamnulose 1-phosphate. This Halalkalibacterium halodurans (strain ATCC BAA-125 / DSM 18197 / FERM 7344 / JCM 9153 / C-125) (Bacillus halodurans) protein is Rhamnulokinase.